The sequence spans 120 residues: Small ribosomal subunit protein eS24 (120 aa).

The segment at 101-120 (RDAGTKQKKGGSKGGQGAKG) is disordered.

This sequence belongs to the eukaryotic ribosomal protein eS24 family.

The sequence is that of Small ribosomal subunit protein eS24 from Saccharolobus islandicus (strain M.16.4 / Kamchatka #3) (Sulfolobus islandicus).